A 425-amino-acid chain; its full sequence is Serine--tRNA ligase (425 aa).

232–234 lines the L-serine pocket; sequence TSE. ATP contacts are provided by residues 263–265 and valine 279; that span reads RRE. Glutamate 286 is a binding site for L-serine. 350-353 lines the ATP pocket; the sequence is EVVS. Residue threonine 387 participates in L-serine binding.

This sequence belongs to the class-II aminoacyl-tRNA synthetase family. Type-1 seryl-tRNA synthetase subfamily. As to quaternary structure, homodimer. The tRNA molecule binds across the dimer.

It is found in the cytoplasm. It catalyses the reaction tRNA(Ser) + L-serine + ATP = L-seryl-tRNA(Ser) + AMP + diphosphate + H(+). It carries out the reaction tRNA(Sec) + L-serine + ATP = L-seryl-tRNA(Sec) + AMP + diphosphate + H(+). It participates in aminoacyl-tRNA biosynthesis; selenocysteinyl-tRNA(Sec) biosynthesis; L-seryl-tRNA(Sec) from L-serine and tRNA(Sec): step 1/1. Catalyzes the attachment of serine to tRNA(Ser). Is also able to aminoacylate tRNA(Sec) with serine, to form the misacylated tRNA L-seryl-tRNA(Sec), which will be further converted into selenocysteinyl-tRNA(Sec). The sequence is that of Serine--tRNA ligase from Methanocella arvoryzae (strain DSM 22066 / NBRC 105507 / MRE50).